Consider the following 260-residue polypeptide: MATISSILPCHGLLQHCSSSSSSSKPKFSSQNLVQLQSFSNGFGLKLKTRVSTNPPLLKVRAVVTEETSSSSTASSSSDGEGARRLYVGNIPRNLNNDELRTIVEEHGAIEIAEVMYDKYSGRSRRFGFVTMKTVEDANAVIEKLNDTEIGGRKIKVNITEKPLEGMDIATTQAEDSQFVESPYKVYIGNLAKTVTNELLKDFFSEKGKVLGAKVQRTPGTSKSNGFGFVSFSSEEEVEAAIQALNNSVLEGQKIRVNKA.

The N-terminal 62 residues, 1–62, are a transit peptide targeting the chloroplast; it reads MATISSILPC…TNPPLLKVRA (62 aa). Positions 63–78 are enriched in low complexity; that stretch reads VVTEETSSSSTASSSS. Positions 63–83 are disordered; that stretch reads VVTEETSSSSTASSSSDGEGA. RRM domains follow at residues 84–162 and 184–260; these read RRLY…ITEK and YKVY…VNKA.

In terms of assembly, component of the chloroplast small ribosomal subunit (SSU). Mature 70S chloroplast ribosomes of higher plants consist of a small (30S) and a large (50S) subunit. The 30S small subunit contains 1 molecule of ribosomal RNA (16S rRNA) and 24 different proteins. The 50S large subunit contains 3 rRNA molecules (23S, 5S and 4.5S rRNA) and 33 different proteins.

It localises to the plastid. It is found in the chloroplast. Functionally, component of the chloroplast ribosome (chloro-ribosome), a dedicated translation machinery responsible for the synthesis of chloroplast genome-encoded proteins, including proteins of the transcription and translation machinery and components of the photosynthetic apparatus. cS22 may have a role in the recruitment of stored chloroplast mRNAs for active protein synthesis. The polypeptide is Small ribosomal subunit protein cS22 (PSRP2) (Spinacia oleracea (Spinach)).